The following is a 405-amino-acid chain: Tryptophan synthase beta chain (405 aa).

At Lys86 the chain carries N6-(pyridoxal phosphate)lysine.

The protein belongs to the TrpB family. As to quaternary structure, tetramer of two alpha and two beta chains. Requires pyridoxal 5'-phosphate as cofactor.

The catalysed reaction is (1S,2R)-1-C-(indol-3-yl)glycerol 3-phosphate + L-serine = D-glyceraldehyde 3-phosphate + L-tryptophan + H2O. It participates in amino-acid biosynthesis; L-tryptophan biosynthesis; L-tryptophan from chorismate: step 5/5. Functionally, the beta subunit is responsible for the synthesis of L-tryptophan from indole and L-serine. The protein is Tryptophan synthase beta chain of Shewanella piezotolerans (strain WP3 / JCM 13877).